Reading from the N-terminus, the 535-residue chain is T-complex protein 1 subunit beta (535 aa).

The residue at position 2 (alanine 2) is an N-acetylalanine. Serine 3 bears the Phosphoserine mark. Lysine 13 bears the N6-acetyllysine mark. Position 44 (glycine 44) interacts with ADP. Position 44 (glycine 44) interacts with ATP. Residue aspartate 97 participates in Mg(2+) binding. Residues glycine 98, threonine 99, threonine 100, serine 101, serine 168, and serine 169 each contribute to the ADP site. The ATP site is built by glycine 98, threonine 99, and threonine 100. At lysine 181 the chain carries N6-acetyllysine. Lysine 248 participates in a covalent cross-link: Glycyl lysine isopeptide (Lys-Gly) (interchain with G-Cter in SUMO2). Serine 260 is subject to Phosphoserine. Threonine 261 bears the Phosphothreonine mark. 3 residues coordinate ADP: glycine 410, glutamate 495, and lysine 500. The ATP site is built by glutamate 495 and lysine 500.

The protein belongs to the TCP-1 chaperonin family. Component of the chaperonin-containing T-complex (TRiC), a hexadecamer composed of two identical back-to-back stacked rings enclosing a protein folding chamber. Each ring is made up of eight different subunits: TCP1/CCT1, CCT2, CCT3, CCT4, CCT5, CCT6A/CCT6, CCT7, CCT8. Interacts with PACRG. Interacts with FLCN. Interacts with DLEC1. Interacts with SVEP1. The N-terminus is blocked.

The protein resides in the cytoplasm. It catalyses the reaction ATP + H2O = ADP + phosphate + H(+). Its function is as follows. Component of the chaperonin-containing T-complex (TRiC), a molecular chaperone complex that assists the folding of actin, tubulin and other proteins upon ATP hydrolysis. The TRiC complex mediates the folding of WRAP53/TCAB1, thereby regulating telomere maintenance. As part of the TRiC complex may play a role in the assembly of BBSome, a complex involved in ciliogenesis regulating transports vesicles to the cilia. The sequence is that of T-complex protein 1 subunit beta (Cct2) from Mus musculus (Mouse).